The following is a 234-amino-acid chain: CD-NTase-associated protein 13 (234 aa).

Residues 20–42 (TIMKNVIANVSTAITLALMILWI) traverse the membrane as a helical segment.

In the C-terminal section; belongs to the bacterial STING family.

It is found in the cell inner membrane. Its function is as follows. Effector protein of a CBASS antivirus system. CBASS (cyclic oligonucleotide-based antiphage signaling system) provides immunity against bacteriophage. The CD-NTase protein synthesizes cyclic nucleotides in response to infection; these serve as specific second messenger signals. The signals activate a diverse range of effectors, leading to bacterial cell death and thus abortive phage infection. A type I-D CBASS(GG) system. Functionally, binds c-di-GMP (synthesized by the cognate CdnE encoded upstream in the same operon) and about 10-fold less well 3'3'-cGAMP, but not c-di-AMP, 2'3'-cGAMP or cUMP-AMP (tested with a protein without the transmembrane region). The effector protein for this CBASS system, its activity is stimulated by c-di-GMP and leads to cell death. This chain is CD-NTase-associated protein 13, found in Roseivirga ehrenbergii (strain DSM 102268 / JCM 13514 / KCTC 12282 / NCIMB 14502 / KMM 6017).